Consider the following 88-residue polypeptide: LYR motif-containing protein 2 (88 aa).

A mitochondrion-targeting transit peptide spans methionine 1–arginine 19.

It belongs to the complex I LYR family.

It is found in the mitochondrion. Its function is as follows. Involved in efficient integration of the N-module into mitochondrial respiratory chain complex I. In Danio rerio (Zebrafish), this protein is LYR motif-containing protein 2 (lyrm2).